The following is a 304-amino-acid chain: Porphobilinogen deaminase (304 aa).

At Cys-240 the chain carries S-(dipyrrolylmethanemethyl)cysteine.

It belongs to the HMBS family. As to quaternary structure, monomer. The cofactor is dipyrromethane.

The catalysed reaction is 4 porphobilinogen + H2O = hydroxymethylbilane + 4 NH4(+). The protein operates within porphyrin-containing compound metabolism; protoporphyrin-IX biosynthesis; coproporphyrinogen-III from 5-aminolevulinate: step 2/4. Tetrapolymerization of the monopyrrole PBG into the hydroxymethylbilane pre-uroporphyrinogen in several discrete steps. In Xanthomonas campestris pv. campestris (strain B100), this protein is Porphobilinogen deaminase.